A 283-amino-acid polypeptide reads, in one-letter code: Homeobox protein six1a (283 aa).

The segment at residues 124-183 is a DNA-binding region (homeobox); sequence GEETSYCFKEKSRSVLREWYTHNPYPSPREKRELAEATGLTTTQVSNWFKNRRQRDRAAE. Positions 168-264 are disordered; that stretch reads VSNWFKNRRQ…PLHGMQGHPH (97 aa). A compositionally biased stretch (basic and acidic residues) spans 179–190; it reads DRAAEAKERENG. Positions 237–248 are enriched in low complexity; sequence MNNPAAPAYPMP.

The protein belongs to the SIX/Sine oculis homeobox family.

It is found in the nucleus. It localises to the cytoplasm. Transcription factor that is involved in the regulation of cell proliferation, apoptosis and embryonic development. Depending on context, functions as a transcriptional repressor or activator. Plays an important role in the development of the inner ear, where it promotes hair cell proliferation and inhibits proliferation of neural progenitor cells. Required for normal myogenesis. Plays a role in the development of fast muscle fibers throughout the body, as well as the development of craniofacial muscles. The chain is Homeobox protein six1a (six1a) from Danio rerio (Zebrafish).